The primary structure comprises 428 residues: UDP-N-acetylglucosamine 1-carboxyvinyltransferase 2 (428 aa).

A phosphoenolpyruvate-binding site is contributed by 22–23 (KN). R92 contacts UDP-N-acetyl-alpha-D-glucosamine. Catalysis depends on C116, which acts as the Proton donor. C116 carries the post-translational modification 2-(S-cysteinyl)pyruvic acid O-phosphothioketal. UDP-N-acetyl-alpha-D-glucosamine-binding positions include 121–125 (RPIDQ), D304, and I326.

Belongs to the EPSP synthase family. MurA subfamily.

It is found in the cytoplasm. It catalyses the reaction phosphoenolpyruvate + UDP-N-acetyl-alpha-D-glucosamine = UDP-N-acetyl-3-O-(1-carboxyvinyl)-alpha-D-glucosamine + phosphate. It participates in cell wall biogenesis; peptidoglycan biosynthesis. Its function is as follows. Cell wall formation. Adds enolpyruvyl to UDP-N-acetylglucosamine. This is UDP-N-acetylglucosamine 1-carboxyvinyltransferase 2 from Oceanobacillus iheyensis (strain DSM 14371 / CIP 107618 / JCM 11309 / KCTC 3954 / HTE831).